A 238-amino-acid chain; its full sequence is Ribonuclease PH (238 aa).

Phosphate-binding positions include Arg86 and Gly124–Arg126.

Belongs to the RNase PH family. Homohexameric ring arranged as a trimer of dimers.

It carries out the reaction tRNA(n+1) + phosphate = tRNA(n) + a ribonucleoside 5'-diphosphate. In terms of biological role, phosphorolytic 3'-5' exoribonuclease that plays an important role in tRNA 3'-end maturation. Removes nucleotide residues following the 3'-CCA terminus of tRNAs; can also add nucleotides to the ends of RNA molecules by using nucleoside diphosphates as substrates, but this may not be physiologically important. Probably plays a role in initiation of 16S rRNA degradation (leading to ribosome degradation) during starvation. This is Ribonuclease PH from Pectobacterium atrosepticum (strain SCRI 1043 / ATCC BAA-672) (Erwinia carotovora subsp. atroseptica).